A 316-amino-acid chain; its full sequence is Olfactory receptor 2T11 (316 aa).

Residues 1–22 (MTNTSSSDFTLLGLLVNSEAAG) are Extracellular-facing. Asn3 carries N-linked (GlcNAc...) asparagine glycosylation. A helical transmembrane segment spans residues 23–46 (IVFTVILAVFLGAVTANLVMIFLI). At 47 to 54 (QVDSRLHT) the chain is on the cytoplasmic side. Residues 55-76 (PMYFLLSQLSIMDTLFICTTVP) form a helical membrane-spanning segment. At 77–97 (KLLADMVSKEKIISFVACGIQ) the chain is on the extracellular side. A disulfide bridge links Cys94 with Cys186. A helical membrane pass occupies residues 98-117 (IFLYLTMIGSEFFLLGLMAY). Residues 118-136 (DCYVAVCNPLRYPVLMNRK) lie on the Cytoplasmic side of the membrane. A helical transmembrane segment spans residues 137 to 155 (KCLLLAAGAWFGGSLDGFL). The Extracellular portion of the chain corresponds to 156–192 (LTPITMNVPYCGSRSINHFFCEIPAVLKLACADTSLY). Residues 193–216 (ETLMYICCVLMLLIPISIISTSYS) form a helical membrane-spanning segment. At 217 to 233 (LILLTIHRMPSAEGRKK) the chain is on the cytoplasmic side. Residues 234–256 (AFTTCSSHLTVVSIFYGAAFYTY) traverse the membrane as a helical segment. Residues 257 to 269 (VLPQSFHTPEQDK) are Extracellular-facing. Residues 270–289 (VVSAFYTIVTPMLNPLIYSL) traverse the membrane as a helical segment. The Cytoplasmic segment spans residues 290–316 (RNKDVIGAFKKVFACCSSAQKVATSDA).

The protein belongs to the G-protein coupled receptor 1 family.

The protein localises to the cell membrane. Odorant receptor. The protein is Olfactory receptor 2T11 (OR2T11) of Homo sapiens (Human).